Here is a 283-residue protein sequence, read N- to C-terminus: Glutamyl-Q tRNA(Asp) synthetase (283 aa).

L-glutamate contacts are provided by residues 5–9 (RFAPT) and Glu-41. The 'HIGH' region motif lies at 8 to 18 (PTPSGPLHLGS). Residues Cys-97, Cys-99, Tyr-111, and Cys-115 each contribute to the Zn(2+) site. Positions 168 and 186 each coordinate L-glutamate. The 'KMSKS' region signature appears at 224–228 (KLSKQ). Position 227 (Lys-227) interacts with ATP.

The protein belongs to the class-I aminoacyl-tRNA synthetase family. GluQ subfamily. It depends on Zn(2+) as a cofactor.

Catalyzes the tRNA-independent activation of glutamate in presence of ATP and the subsequent transfer of glutamate onto a tRNA(Asp). Glutamate is transferred on the 2-amino-5-(4,5-dihydroxy-2-cyclopenten-1-yl) moiety of the queuosine in the wobble position of the QUC anticodon. In Idiomarina loihiensis (strain ATCC BAA-735 / DSM 15497 / L2-TR), this protein is Glutamyl-Q tRNA(Asp) synthetase.